The primary structure comprises 445 residues: Protein cereblon (445 aa).

The segment at 1 to 50 (MAAEEGGDGRRNMGNPPPPAPAESEEEDDNEMEVEDQDGKEAEKPNMINF) is disordered. Over residues 23-36 (ESEEEDDNEMEVED) the composition is skewed to acidic residues. In terms of domain architecture, Lon N-terminal spans 82 to 321 (IPVLPHVMVM…CELDIMNKCT (240 aa)). The CULT domain occupies 320–428 (CTSLCCKQCQ…LTRSALLPRI (109 aa)). Positions 325 and 328 each coordinate Zn(2+). His380, Trp382, and Trp388 together coordinate (S)-thalidomide. The Zn(2+) site is built by Cys393 and Cys396.

The protein belongs to the CRBN family. As to quaternary structure, component of a DCX (DDB1-CUL4-X-box) protein ligase complex. Interacts directly with DDB1.

The protein localises to the cytoplasm. Its subcellular location is the nucleus. Its pathway is protein modification; protein ubiquitination. Substrate recognition component of a DCX (DDB1-CUL4-X-box) E3 protein ligase complex that mediates the ubiquitination and subsequent proteasomal degradation of target proteins, such as MEIS2. Normal degradation of key regulatory proteins is required for normal limb outgrowth and expression of the fibroblast growth factor FGF8. Maintains presynaptic glutamate release and consequently cognitive functions, such as memory and learning, by negatively regulating large-conductance calcium-activated potassium (BK) channels in excitatory neurons. Likely to function by regulating the assembly and neuronal surface expression of BK channels via its interaction with KCNT1. May also be involved in regulating anxiety-like behaviors via a BK channel-independent mechanism. This chain is Protein cereblon (CRBN), found in Gallus gallus (Chicken).